The primary structure comprises 258 residues: Acetylglutamate kinase (258 aa).

Residues 41-42, Arg-63, and Asn-156 each bind substrate; that span reads GG.

This sequence belongs to the acetylglutamate kinase family. ArgB subfamily.

Its subcellular location is the cytoplasm. It carries out the reaction N-acetyl-L-glutamate + ATP = N-acetyl-L-glutamyl 5-phosphate + ADP. The protein operates within amino-acid biosynthesis; L-arginine biosynthesis; N(2)-acetyl-L-ornithine from L-glutamate: step 2/4. Functionally, catalyzes the ATP-dependent phosphorylation of N-acetyl-L-glutamate. This is Acetylglutamate kinase from Geobacillus thermodenitrificans (strain NG80-2).